A 448-amino-acid polypeptide reads, in one-letter code: Glutamyl-tRNA reductase (448 aa).

Residues 49–52, Ser109, 114–116, and Gln120 contribute to the substrate site; these read TCNR and ETQ. Cys50 functions as the Nucleophile in the catalytic mechanism. 189 to 194 lines the NADP(+) pocket; it reads GAGEMG.

This sequence belongs to the glutamyl-tRNA reductase family. As to quaternary structure, homodimer.

It catalyses the reaction (S)-4-amino-5-oxopentanoate + tRNA(Glu) + NADP(+) = L-glutamyl-tRNA(Glu) + NADPH + H(+). It functions in the pathway porphyrin-containing compound metabolism; protoporphyrin-IX biosynthesis; 5-aminolevulinate from L-glutamyl-tRNA(Glu): step 1/2. Its function is as follows. Catalyzes the NADPH-dependent reduction of glutamyl-tRNA(Glu) to glutamate 1-semialdehyde (GSA). This is Glutamyl-tRNA reductase from Staphylococcus epidermidis (strain ATCC 35984 / DSM 28319 / BCRC 17069 / CCUG 31568 / BM 3577 / RP62A).